Here is a 188-residue protein sequence, read N- to C-terminus: NAD(P)H-quinone oxidoreductase subunit 6, chloroplastic (188 aa).

5 consecutive transmembrane segments (helical) span residues G10–N30, I32–V52, A61–I81, G97–L117, and F153–T173.

Belongs to the complex I subunit 6 family. In terms of assembly, NDH is composed of at least 16 different subunits, 5 of which are encoded in the nucleus.

Its subcellular location is the plastid. It localises to the chloroplast thylakoid membrane. It catalyses the reaction a plastoquinone + NADH + (n+1) H(+)(in) = a plastoquinol + NAD(+) + n H(+)(out). It carries out the reaction a plastoquinone + NADPH + (n+1) H(+)(in) = a plastoquinol + NADP(+) + n H(+)(out). NDH shuttles electrons from NAD(P)H:plastoquinone, via FMN and iron-sulfur (Fe-S) centers, to quinones in the photosynthetic chain and possibly in a chloroplast respiratory chain. The immediate electron acceptor for the enzyme in this species is believed to be plastoquinone. Couples the redox reaction to proton translocation, and thus conserves the redox energy in a proton gradient. The sequence is that of NAD(P)H-quinone oxidoreductase subunit 6, chloroplastic (ndhG) from Psilotum nudum (Whisk fern).